We begin with the raw amino-acid sequence, 105 residues long: Iron-sulfur cluster assembly protein CyaY (105 aa).

Belongs to the frataxin family.

In terms of biological role, involved in iron-sulfur (Fe-S) cluster assembly. May act as a regulator of Fe-S biogenesis. This chain is Iron-sulfur cluster assembly protein CyaY, found in Photobacterium profundum (strain SS9).